The primary structure comprises 192 residues: Small ribosomal subunit protein uS5 (192 aa).

The S5 DRBM domain maps to 20–83; the sequence is FVDKLVHINR…EAAKRGLIRV (64 aa). Positions 162–192 are disordered; the sequence is SVAARRGLKVSALQARRRDADPADTSEAAVA.

This sequence belongs to the universal ribosomal protein uS5 family. As to quaternary structure, part of the 30S ribosomal subunit. Contacts proteins S4 and S8.

Its function is as follows. With S4 and S12 plays an important role in translational accuracy. Functionally, located at the back of the 30S subunit body where it stabilizes the conformation of the head with respect to the body. The protein is Small ribosomal subunit protein uS5 of Methylorubrum extorquens (strain CM4 / NCIMB 13688) (Methylobacterium extorquens).